A 320-amino-acid chain; its full sequence is Adhesin MafA 3 (320 aa).

An N-terminal signal peptide occupies residues 1–18 (MQARLLIPILFSVFILSA). Residue C19 is the site of N-palmitoyl cysteine attachment. C19 carries the S-diacylglycerol cysteine lipid modification. The span at 288 to 298 (HTGNSAPSVET) shows a compositional bias: polar residues. The interval 288-320 (HTGNSAPSVETDNSHEGYGYSDEVVRQHRQGQP) is disordered.

It belongs to the MafA family.

It localises to the cell outer membrane. This Neisseria meningitidis serogroup C / serotype 2a (strain ATCC 700532 / DSM 15464 / FAM18) protein is Adhesin MafA 3 (mafA3).